The following is a 360-amino-acid chain: NAD(P)H-quinone oxidoreductase subunit 1, chloroplastic (360 aa).

The next 8 helical transmembrane spans lie at I27–I47, F98–F118, I129–G149, A165–L185, F203–L223, F253–V273, I297–I317, and F340–L360.

This sequence belongs to the complex I subunit 1 family. In terms of assembly, NDH is composed of at least 16 different subunits, 5 of which are encoded in the nucleus.

Its subcellular location is the plastid. It localises to the chloroplast thylakoid membrane. The catalysed reaction is a plastoquinone + NADH + (n+1) H(+)(in) = a plastoquinol + NAD(+) + n H(+)(out). The enzyme catalyses a plastoquinone + NADPH + (n+1) H(+)(in) = a plastoquinol + NADP(+) + n H(+)(out). Functionally, NDH shuttles electrons from NAD(P)H:plastoquinone, via FMN and iron-sulfur (Fe-S) centers, to quinones in the photosynthetic chain and possibly in a chloroplast respiratory chain. The immediate electron acceptor for the enzyme in this species is believed to be plastoquinone. Couples the redox reaction to proton translocation, and thus conserves the redox energy in a proton gradient. The chain is NAD(P)H-quinone oxidoreductase subunit 1, chloroplastic from Lobularia maritima (Sweet alyssum).